The sequence spans 366 residues: Ribonuclease P protein subunit drpp30 (366 aa).

The segment at Glu265–Glu366 is disordered. Over residues Pro275–Ile290 the composition is skewed to basic and acidic residues. Low complexity-rich tracts occupy residues Pro291–Ile324 and Thr333–Gln351. Residues Gly352–Glu366 are compositionally biased toward basic and acidic residues.

Belongs to the eukaryotic/archaeal RNase P protein component 3 family.

The protein localises to the nucleus. It carries out the reaction Endonucleolytic cleavage of RNA, removing 5'-extranucleotides from tRNA precursor.. Component of ribonuclease P, a protein complex that generates mature tRNA molecules by cleaving their 5'-ends. This is Ribonuclease P protein subunit drpp30 (drpp30) from Dictyostelium discoideum (Social amoeba).